The following is a 367-amino-acid chain: 4-hydroxy-3-methylbut-2-en-1-yl diphosphate synthase (flavodoxin) (367 aa).

Residues Cys270, Cys273, Cys305, and Glu312 each contribute to the [4Fe-4S] cluster site.

Belongs to the IspG family. The cofactor is [4Fe-4S] cluster.

The catalysed reaction is (2E)-4-hydroxy-3-methylbut-2-enyl diphosphate + oxidized [flavodoxin] + H2O + 2 H(+) = 2-C-methyl-D-erythritol 2,4-cyclic diphosphate + reduced [flavodoxin]. The protein operates within isoprenoid biosynthesis; isopentenyl diphosphate biosynthesis via DXP pathway; isopentenyl diphosphate from 1-deoxy-D-xylulose 5-phosphate: step 5/6. Converts 2C-methyl-D-erythritol 2,4-cyclodiphosphate (ME-2,4cPP) into 1-hydroxy-2-methyl-2-(E)-butenyl 4-diphosphate. This Pasteurella multocida (strain Pm70) protein is 4-hydroxy-3-methylbut-2-en-1-yl diphosphate synthase (flavodoxin).